The chain runs to 457 residues: Bifunctional protein GlmU (457 aa).

Positions 1 to 232 are pyrophosphorylase; that stretch reads MAKVAAIVLA…PMEVMGVNDR (232 aa). UDP-N-acetyl-alpha-D-glucosamine-binding positions include 9–12, lysine 23, glutamine 75, and 80–81; these read LAAG and GT. Aspartate 105 serves as a coordination point for Mg(2+). The UDP-N-acetyl-alpha-D-glucosamine site is built by glycine 142, glutamate 157, asparagine 172, and asparagine 230. Asparagine 230 contributes to the Mg(2+) binding site. Residues 233–253 form a linker region; sequence VQLAEAGRIIRVRINKALMVA. Residues 254-457 form an N-acetyltransferase region; the sequence is GTTIIDPETT…NKEGWKLKNK (204 aa). UDP-N-acetyl-alpha-D-glucosamine contacts are provided by arginine 336 and lysine 354. Catalysis depends on histidine 366, which acts as the Proton acceptor. UDP-N-acetyl-alpha-D-glucosamine-binding residues include tyrosine 369 and asparagine 380. Acetyl-CoA-binding positions include 389–390, serine 408, alanine 426, and arginine 443; that span reads NY.

This sequence in the N-terminal section; belongs to the N-acetylglucosamine-1-phosphate uridyltransferase family. In the C-terminal section; belongs to the transferase hexapeptide repeat family. Homotrimer. The cofactor is Mg(2+).

Its subcellular location is the cytoplasm. It carries out the reaction alpha-D-glucosamine 1-phosphate + acetyl-CoA = N-acetyl-alpha-D-glucosamine 1-phosphate + CoA + H(+). The catalysed reaction is N-acetyl-alpha-D-glucosamine 1-phosphate + UTP + H(+) = UDP-N-acetyl-alpha-D-glucosamine + diphosphate. Its pathway is nucleotide-sugar biosynthesis; UDP-N-acetyl-alpha-D-glucosamine biosynthesis; N-acetyl-alpha-D-glucosamine 1-phosphate from alpha-D-glucosamine 6-phosphate (route II): step 2/2. It functions in the pathway nucleotide-sugar biosynthesis; UDP-N-acetyl-alpha-D-glucosamine biosynthesis; UDP-N-acetyl-alpha-D-glucosamine from N-acetyl-alpha-D-glucosamine 1-phosphate: step 1/1. The protein operates within bacterial outer membrane biogenesis; LPS lipid A biosynthesis. In terms of biological role, catalyzes the last two sequential reactions in the de novo biosynthetic pathway for UDP-N-acetylglucosamine (UDP-GlcNAc). The C-terminal domain catalyzes the transfer of acetyl group from acetyl coenzyme A to glucosamine-1-phosphate (GlcN-1-P) to produce N-acetylglucosamine-1-phosphate (GlcNAc-1-P), which is converted into UDP-GlcNAc by the transfer of uridine 5-monophosphate (from uridine 5-triphosphate), a reaction catalyzed by the N-terminal domain. This Geotalea daltonii (strain DSM 22248 / JCM 15807 / FRC-32) (Geobacter daltonii) protein is Bifunctional protein GlmU.